We begin with the raw amino-acid sequence, 244 residues long: Ethylene-responsive transcription factor 1 (244 aa).

A DNA-binding region (AP2/ERF) is located at residues 106 to 164 (HYRGVRQRPWGKFAAEIRDPAKNGARVWLGTYESAEEAALAYGKAAFRMRGTKALLNFP). The span at 186–198 (SASSSVSSASESG) shows a compositional bias: low complexity. The tract at residues 186–214 (SASSSVSSASESGSPKRRRKGVAAKQAEL) is disordered.

It belongs to the ethylene-response factor family. Class 1 subfamily. As to expression, present in stems.

It localises to the nucleus. Functionally, involved in the regulation of gene expression during fruit ripening, by stress factors and by components of stress signal transduction pathways. Transcription factor that binds to the GCC-box pathogenesis-related promoter element. Probably acts as a transcriptional activator and may be involved in disease resistance pathways. This Solanum lycopersicum (Tomato) protein is Ethylene-responsive transcription factor 1 (ERF1).